The sequence spans 379 residues: Guanine nucleotide-binding protein G(s) subunit alpha (379 aa).

Residues 1 to 25 (MGCLGNSKTEDQRNEEKVQRETNKK) form a disordered region. G2 carries the N-palmitoyl glycine lipid modification. C3 carries S-palmitoyl cysteine lipidation. Over residues 8–25 (KTEDQRNEEKVQRETNKK) the composition is skewed to basic and acidic residues. The G-alpha domain occupies 39–379 (ATHRLLLLGA…RMHLRQYELL (341 aa)). Positions 42-55 (RLLLLGAGESGKSS) are G1 motif. GTP-binding positions include 47-55 (GAGESGKSS), 182-189 (LLRCRVLT), 208-212 (DVGGQ), 277-280 (NKQD), and A351. Mg(2+) is bound by residues S54 and T189. The interval 181 to 189 (DLLRCRVLT) is G2 motif. The tract at residues 204–213 (FHMFDVGGQR) is G3 motif. A G4 motif region spans residues 273–280 (ILFLNKQD). The interval 349–354 (TCAVDT) is G5 motif.

It belongs to the G-alpha family. G(s) subfamily. In terms of assembly, heterotrimeric G proteins are composed of 3 units; alpha, beta and gamma. The alpha chain contains the guanine nucleotide binding site.

Its subcellular location is the cell membrane. In terms of biological role, guanine nucleotide-binding proteins (G proteins) function as transducers in numerous signaling pathways controlled by G protein-coupled receptors (GPCRs). Signaling involves the activation of adenylyl cyclases, resulting in increased levels of the signaling molecule cAMP. GNAS functions downstream of several GPCRs, including beta-adrenergic receptors. Stimulates the Ras signaling pathway. In Xenopus laevis (African clawed frog), this protein is Guanine nucleotide-binding protein G(s) subunit alpha (gnas).